The following is a 483-amino-acid chain: ATP synthase subunit beta (483 aa).

162–169 (GGAGVGKT) contributes to the ATP binding site.

This sequence belongs to the ATPase alpha/beta chains family. In terms of assembly, F-type ATPases have 2 components, CF(1) - the catalytic core - and CF(0) - the membrane proton channel. CF(1) has five subunits: alpha(3), beta(3), gamma(1), delta(1), epsilon(1). CF(0) has four main subunits: a(1), b(1), b'(1) and c(9-12).

The protein resides in the cellular thylakoid membrane. The catalysed reaction is ATP + H2O + 4 H(+)(in) = ADP + phosphate + 5 H(+)(out). In terms of biological role, produces ATP from ADP in the presence of a proton gradient across the membrane. The catalytic sites are hosted primarily by the beta subunits. This Prochloron didemni protein is ATP synthase subunit beta.